We begin with the raw amino-acid sequence, 524 residues long: Cytochrome P450 1A1 (524 aa).

The mitochondrial targeting signal stretch occupies residues 33-44; the sequence is TRTWVPKGLKSP. O-linked (GlcNAc) serine glycosylation occurs at S71. F228 is a binding site for substrate. C461 provides a ligand contact to heme.

The protein belongs to the cytochrome P450 family. In terms of assembly, both Cytochrome P450MT2A and Cytochrome P450MT2B interact with cytosolic chaperones HSP70 and HSP90; this interaction is required for initial targeting to mitochondria. P450MT2B interacts (via mitochondrial targeting signal) with TOMM40 (via N-terminus); this interaction is required for translocation across the mitochondrial outer membrane. Heme is required as a cofactor. Two forms; MT2A (long form) and MT2B (short form); are produced by NH2-terminal proteolytic cleavage. This cleavage activates a cryptic mitochondrial targeting signal. As to expression, liver.

It localises to the cytoplasm. It is found in the endoplasmic reticulum membrane. The protein localises to the mitochondrion inner membrane. The protein resides in the microsome membrane. It catalyses the reaction an organic molecule + reduced [NADPH--hemoprotein reductase] + O2 = an alcohol + oxidized [NADPH--hemoprotein reductase] + H2O + H(+). The enzyme catalyses estrone + reduced [NADPH--hemoprotein reductase] + O2 = 2-hydroxyestrone + oxidized [NADPH--hemoprotein reductase] + H2O + H(+). The catalysed reaction is estrone + reduced [NADPH--hemoprotein reductase] + O2 = 4-hydroxyestrone + oxidized [NADPH--hemoprotein reductase] + H2O + H(+). It carries out the reaction estrone + reduced [NADPH--hemoprotein reductase] + O2 = 6alpha-hydroxyestrone + oxidized [NADPH--hemoprotein reductase] + H2O + H(+). It catalyses the reaction estrone + reduced [NADPH--hemoprotein reductase] + O2 = 15alpha-hydroxyestrone + oxidized [NADPH--hemoprotein reductase] + H2O + H(+). The enzyme catalyses estrone + reduced [NADPH--hemoprotein reductase] + O2 = 16alpha-hydroxyestrone + oxidized [NADPH--hemoprotein reductase] + H2O + H(+). The catalysed reaction is 17beta-estradiol + reduced [NADPH--hemoprotein reductase] + O2 = 2-hydroxy-17beta-estradiol + oxidized [NADPH--hemoprotein reductase] + H2O + H(+). It carries out the reaction 17beta-estradiol + reduced [NADPH--hemoprotein reductase] + O2 = 4-hydroxy-17beta-estradiol + oxidized [NADPH--hemoprotein reductase] + H2O + H(+). It catalyses the reaction 17beta-estradiol + reduced [NADPH--hemoprotein reductase] + O2 = 6alpha-hydroxy-17beta-estradiol + oxidized [NADPH--hemoprotein reductase] + H2O + H(+). The enzyme catalyses 17beta-estradiol + reduced [NADPH--hemoprotein reductase] + O2 = 7alpha-hydroxy-17beta-estradiol + oxidized [NADPH--hemoprotein reductase] + H2O + H(+). The catalysed reaction is 17beta-estradiol + reduced [NADPH--hemoprotein reductase] + O2 = 15alpha-hydroxy-17beta-estradiol + oxidized [NADPH--hemoprotein reductase] + H2O + H(+). It carries out the reaction (5Z,8Z,11Z)-eicosatrienoate + reduced [NADPH--hemoprotein reductase] + O2 = 19-hydroxy-(5Z,8Z,11Z)-eicosatrienoate + oxidized [NADPH--hemoprotein reductase] + H2O + H(+). It catalyses the reaction (5Z,8Z,11Z,14Z)-eicosatetraenoate + reduced [NADPH--hemoprotein reductase] + O2 = 16-hydroxy-(5Z,8Z,11Z,14Z)-eicosatetraenoate + oxidized [NADPH--hemoprotein reductase] + H2O + H(+). The enzyme catalyses (5Z,8Z,11Z,14Z)-eicosatetraenoate + reduced [NADPH--hemoprotein reductase] + O2 = 17-hydroxy-(5Z,8Z,11Z,14Z)-eicosatetraenoate + oxidized [NADPH--hemoprotein reductase] + H2O + H(+). The catalysed reaction is (5Z,8Z,11Z,14Z)-eicosatetraenoate + reduced [NADPH--hemoprotein reductase] + O2 = 18-hydroxy-(5Z,8Z,11Z,14Z)-eicosatetraenoate + oxidized [NADPH--hemoprotein reductase] + H2O + H(+). It carries out the reaction (5Z,8Z,11Z,14Z)-eicosatetraenoate + reduced [NADPH--hemoprotein reductase] + O2 = 19-hydroxy-(5Z,8Z,11Z,14Z)-eicosatetraenoate + oxidized [NADPH--hemoprotein reductase] + H2O + H(+). It catalyses the reaction (5Z,8Z,11Z,14Z,17Z)-eicosapentaenoate + reduced [NADPH--hemoprotein reductase] + O2 = 19-hydroxy-(5Z,8Z,11Z,14Z,17Z)-eicosapentaenoate + oxidized [NADPH--hemoprotein reductase] + H2O + H(+). The enzyme catalyses (5Z,8Z,11Z,14Z)-eicosatetraenoate + reduced [NADPH--hemoprotein reductase] + O2 = (8R,9S)-epoxy-(5Z,11Z,14Z)-eicosatrienoate + oxidized [NADPH--hemoprotein reductase] + H2O + H(+). The catalysed reaction is (5Z,8Z,11Z,14Z)-eicosatetraenoate + reduced [NADPH--hemoprotein reductase] + O2 = (11R,12S)-epoxy-(5Z,8Z,14Z)-eicosatrienoate + oxidized [NADPH--hemoprotein reductase] + H2O + H(+). It carries out the reaction (5Z,8Z,11Z,14Z)-eicosatetraenoate + reduced [NADPH--hemoprotein reductase] + O2 = (11S,12R)-epoxy-(5Z,8Z,14Z)-eicosatrienoate + oxidized [NADPH--hemoprotein reductase] + H2O + H(+). It catalyses the reaction (5Z,8Z,11Z,14Z)-eicosatetraenoate + reduced [NADPH--hemoprotein reductase] + O2 = (14R,15S)-epoxy-(5Z,8Z,11Z)-eicosatrienoate + oxidized [NADPH--hemoprotein reductase] + H2O + H(+). The enzyme catalyses (5Z,8Z,11Z,14Z,17Z)-eicosapentaenoate + reduced [NADPH--hemoprotein reductase] + O2 = (17R,18S)-epoxy-(5Z,8Z,11Z,14Z)-eicosatetraenoate + oxidized [NADPH--hemoprotein reductase] + H2O + H(+). The catalysed reaction is (4Z,7Z,10Z,13Z,16Z,19Z)-docosahexaenoate + reduced [NADPH--hemoprotein reductase] + O2 = (19S,20R)-epoxy-(4Z,7Z,10Z,13Z,16Z)-docosapentaenoate + oxidized [NADPH--hemoprotein reductase] + H2O + H(+). It carries out the reaction (4Z,7Z,10Z,13Z,16Z,19Z)-docosahexaenoate + reduced [NADPH--hemoprotein reductase] + O2 = (19R,20S)-epoxy-(4Z,7Z,10Z,13Z,16Z)-docosapentaenoate + oxidized [NADPH--hemoprotein reductase] + H2O + H(+). It catalyses the reaction all-trans-retinol + reduced [NADPH--hemoprotein reductase] + O2 = all-trans-retinal + oxidized [NADPH--hemoprotein reductase] + 2 H2O + H(+). The enzyme catalyses all-trans-retinal + reduced [NADPH--hemoprotein reductase] + O2 = all-trans-retinoate + oxidized [NADPH--hemoprotein reductase] + H2O + 2 H(+). The catalysed reaction is (13S)-hydroperoxy-(9Z,11E)-octadecadienoate = 13-oxo-(9Z,11E)-octadecadienoate + H2O. It carries out the reaction (12S)-hydroperoxy-(5Z,8Z,10E,14Z)-eicosatetraenoate = 12-oxo-(5Z,8Z,10E,14Z)-eicosatetraenoate + H2O. It catalyses the reaction (15S)-hydroperoxy-(5Z,8Z,11Z,13E)-eicosatetraenoate = 15-oxo-(5Z,8Z,11Z,13E)-eicosatetraenoate + H2O. The enzyme catalyses (5S)-hydroperoxy-(6E,8Z,11Z,14Z)-eicosatetraenoate = 5-oxo-(6E,8Z,11Z,14Z)-eicosatetraenoate + H2O. The protein operates within steroid hormone biosynthesis. It participates in lipid metabolism; fatty acid metabolism. It functions in the pathway cofactor metabolism; retinol metabolism. In terms of biological role, a cytochrome P450 monooxygenase involved in the metabolism of various endogenous substrates, including fatty acids, steroid hormones and vitamins. Mechanistically, uses molecular oxygen inserting one oxygen atom into a substrate, and reducing the second into a water molecule, with two electrons provided by NADPH via cytochrome P450 reductase (CPR; NADPH-ferrihemoprotein reductase). Catalyzes the hydroxylation of carbon-hydrogen bonds. Exhibits high catalytic activity for the formation of hydroxyestrogens from estrone (E1) and 17beta-estradiol (E2), namely 2-hydroxy E1 and E2, as well as D-ring hydroxylated E1 and E2 at the C15alpha and C16alpha positions. Displays different regioselectivities for polyunsaturated fatty acids (PUFA) hydroxylation. Catalyzes the epoxidation of double bonds of certain PUFA. Converts arachidonic acid toward epoxyeicosatrienoic acid (EET) regioisomers, 8,9-, 11,12-, and 14,15-EET, that function as lipid mediators in the vascular system. Displays an absolute stereoselectivity in the epoxidation of eicosapentaenoic acid (EPA) producing the 17(R),18(S) enantiomer. May play an important role in all-trans retinoic acid biosynthesis in extrahepatic tissues. Catalyzes two successive oxidative transformation of all-trans retinol to all-trans retinal and then to the active form all-trans retinoic acid. May also participate in eicosanoids metabolism by converting hydroperoxide species into oxo metabolites (lipoxygenase-like reaction, NADPH-independent). This Rattus norvegicus (Rat) protein is Cytochrome P450 1A1.